The primary structure comprises 172 residues: Large ribosomal subunit protein uL10 (172 aa).

It belongs to the universal ribosomal protein uL10 family. Part of the ribosomal stalk of the 50S ribosomal subunit. The N-terminus interacts with L11 and the large rRNA to form the base of the stalk. The C-terminus forms an elongated spine to which L12 dimers bind in a sequential fashion forming a multimeric L10(L12)X complex.

Its function is as follows. Forms part of the ribosomal stalk, playing a central role in the interaction of the ribosome with GTP-bound translation factors. The chain is Large ribosomal subunit protein uL10 from Brucella anthropi (strain ATCC 49188 / DSM 6882 / CCUG 24695 / JCM 21032 / LMG 3331 / NBRC 15819 / NCTC 12168 / Alc 37) (Ochrobactrum anthropi).